Consider the following 628-residue polypeptide: uncharacterized protein (628 aa).

The protein belongs to the IucA/IucC family.

This is an uncharacterized protein from Sinorhizobium fredii (strain NBRC 101917 / NGR234).